The primary structure comprises 442 residues: Dihydrolipoyllysine-residue acetyltransferase component of pyruvate dehydrogenase complex (442 aa).

The 76-residue stretch at 2–77 (AFEFKLPDIG…TVGQTIITFD (76 aa)) folds into the Lipoyl-binding domain. An N6-lipoyllysine modification is found at Lys43. Over residues 84–97 (LQFKGSDESDDAKT) the composition is skewed to basic and acidic residues. Residues 84 to 136 (LQFKGSDESDDAKTEAQVQSTAEAGQDVAKEEQAQEPAKATGAGQQDQAEVDP) form a disordered region. A Peripheral subunit-binding (PSBD) domain is found at 141 to 178 (IAMPSVRKYAREKGVDIRKVTGSGNNGRVVKEDIDSFV). Over residues 182-208 (AQEAAPQETAAPQETAAKPAAAPAPEG) the composition is skewed to low complexity. The interval 182–215 (AQEAAPQETAAPQETAAKPAAAPAPEGEFPETRE) is disordered. His413 is a catalytic residue.

This sequence belongs to the 2-oxoacid dehydrogenase family. Forms a 24-polypeptide structural core with octahedral symmetry. (R)-lipoate serves as cofactor.

It carries out the reaction N(6)-[(R)-dihydrolipoyl]-L-lysyl-[protein] + acetyl-CoA = N(6)-[(R)-S(8)-acetyldihydrolipoyl]-L-lysyl-[protein] + CoA. The pyruvate dehydrogenase complex catalyzes the overall conversion of pyruvate to acetyl-CoA and CO(2). It contains multiple copies of three enzymatic components: pyruvate dehydrogenase (E1), dihydrolipoamide acetyltransferase (E2) and lipoamide dehydrogenase (E3). Its function is as follows. The B.subtilis PDH complex also possesses branched-chain 2-oxoacid dehydrogenase (BCDH) activity. The protein is Dihydrolipoyllysine-residue acetyltransferase component of pyruvate dehydrogenase complex (pdhC) of Bacillus subtilis (strain 168).